Here is a 379-residue protein sequence, read N- to C-terminus: 1-deoxy-D-xylulose 5-phosphate reductoisomerase (379 aa).

The NADPH site is built by threonine 10, glycine 11, serine 12, isoleucine 13, asparagine 39, and asparagine 121. Lysine 122 contacts 1-deoxy-D-xylulose 5-phosphate. NADPH is bound at residue glutamate 123. Aspartate 147 provides a ligand contact to Mn(2+). 1-deoxy-D-xylulose 5-phosphate is bound by residues serine 148, glutamate 149, serine 173, and histidine 196. Glutamate 149 provides a ligand contact to Mn(2+). Glycine 202 provides a ligand contact to NADPH. 1-deoxy-D-xylulose 5-phosphate is bound by residues serine 209, asparagine 214, lysine 215, and glutamate 218. A Mn(2+)-binding site is contributed by glutamate 218.

Belongs to the DXR family. The cofactor is Mg(2+). Requires Mn(2+) as cofactor.

It catalyses the reaction 2-C-methyl-D-erythritol 4-phosphate + NADP(+) = 1-deoxy-D-xylulose 5-phosphate + NADPH + H(+). It participates in isoprenoid biosynthesis; isopentenyl diphosphate biosynthesis via DXP pathway; isopentenyl diphosphate from 1-deoxy-D-xylulose 5-phosphate: step 1/6. In terms of biological role, catalyzes the NADPH-dependent rearrangement and reduction of 1-deoxy-D-xylulose-5-phosphate (DXP) to 2-C-methyl-D-erythritol 4-phosphate (MEP). The protein is 1-deoxy-D-xylulose 5-phosphate reductoisomerase of Chlamydia caviae (strain ATCC VR-813 / DSM 19441 / 03DC25 / GPIC) (Chlamydophila caviae).